The primary structure comprises 460 residues: tRNA-2-methylthio-N(6)-dimethylallyladenosine synthase (460 aa).

An MTTase N-terminal domain is found at 23-138 (RKVYVHTFGC…LPEMVARAER (116 aa)). [4Fe-4S] cluster-binding residues include cysteine 32, cysteine 68, cysteine 101, cysteine 176, cysteine 180, and cysteine 183. In terms of domain architecture, Radical SAM core spans 162 to 394 (ARGRPTAFVT…QAAQRRIAAA (233 aa)). A TRAM domain is found at 397–460 (AAELGKVVEV…GGSSLSGTPA (64 aa)).

This sequence belongs to the methylthiotransferase family. MiaB subfamily. In terms of assembly, monomer. [4Fe-4S] cluster serves as cofactor.

It is found in the cytoplasm. It catalyses the reaction N(6)-dimethylallyladenosine(37) in tRNA + (sulfur carrier)-SH + AH2 + 2 S-adenosyl-L-methionine = 2-methylsulfanyl-N(6)-dimethylallyladenosine(37) in tRNA + (sulfur carrier)-H + 5'-deoxyadenosine + L-methionine + A + S-adenosyl-L-homocysteine + 2 H(+). In terms of biological role, catalyzes the methylthiolation of N6-(dimethylallyl)adenosine (i(6)A), leading to the formation of 2-methylthio-N6-(dimethylallyl)adenosine (ms(2)i(6)A) at position 37 in tRNAs that read codons beginning with uridine. The chain is tRNA-2-methylthio-N(6)-dimethylallyladenosine synthase from Anaeromyxobacter sp. (strain Fw109-5).